Consider the following 490-residue polypeptide: Betaine aldehyde dehydrogenase (490 aa).

Residues Ile-27 and Asp-93 each coordinate K(+). 150-152 (GAW) contacts NAD(+). The active-site Charge relay system is Lys-162. 176 to 179 (KPSE) contacts NAD(+). Position 180 (Val-180) interacts with K(+). 230-233 (GTDT) serves as a coordination point for NAD(+). Leu-246 provides a ligand contact to K(+). Glu-252 serves as the catalytic Proton acceptor. Residues Gly-254, Cys-286, and Glu-387 each coordinate NAD(+). Residue Cys-286 is the Nucleophile of the active site. Cysteine sulfenic acid (-SOH) is present on Cys-286. K(+)-binding residues include Lys-457 and Gly-460. Residue Glu-464 is the Charge relay system of the active site.

It belongs to the aldehyde dehydrogenase family. As to quaternary structure, dimer of dimers. K(+) is required as a cofactor.

It carries out the reaction betaine aldehyde + NAD(+) + H2O = glycine betaine + NADH + 2 H(+). The protein operates within amine and polyamine biosynthesis; betaine biosynthesis via choline pathway; betaine from betaine aldehyde: step 1/1. In terms of biological role, involved in the biosynthesis of the osmoprotectant glycine betaine. Catalyzes the irreversible oxidation of betaine aldehyde to the corresponding acid. The sequence is that of Betaine aldehyde dehydrogenase from Pseudomonas fluorescens (strain SBW25).